The sequence spans 429 residues: MANVTVVGAQWGDEGKGKIVDWLAERADVVVRFQGGHNAGHTLVVNGVTYKLSLLPSGVVSGTLSIIGNGVVIDPWHFRDEMERLRKQDVVITPDTLAIAETSPLILPLHSELDGFREDRSGDKKIGTTRRGIGPAYEDKVGRRAIRVCDLAHIDEIGSRLDRLIAHHNALRSGFGKPPVDREKLVNDLKEIAGCILPFAKPAWRILADEQKKNRRILFEGAQGVMLDIDHGTYPYVTSSNTIAGSAAGGSGMGASAVGFVLGIAKAYTTRVGAGPFPTELDDEVGQTLGERGHEFGTVTGRRRRCGWFDSVLMRQSVAVAGITGIALTKLDVLDGFDEIKICTGYKIGDKVYDYLPPYYKDQAAAKPVYETIEGWKESTAGARSWSELPAQAIKYIRRIEELIECPITLVSTSPEREDTILVKDPFLG.

Residues Gly-12–Lys-18 and Gly-40–Thr-42 contribute to the GTP site. Asp-13 acts as the Proton acceptor in catalysis. Residues Asp-13 and Gly-40 each contribute to the Mg(2+) site. IMP-binding positions include Asp-13–Lys-16, Asn-38–His-41, Thr-129, Arg-143, Gln-223, Thr-238, and Arg-302. The active-site Proton donor is His-41. Thr-298–Arg-304 is a substrate binding site. Residues Arg-304, Lys-330–Asp-332, and Ser-412–Ser-414 each bind GTP.

The protein belongs to the adenylosuccinate synthetase family. Homodimer. Mg(2+) is required as a cofactor.

Its subcellular location is the cytoplasm. The enzyme catalyses IMP + L-aspartate + GTP = N(6)-(1,2-dicarboxyethyl)-AMP + GDP + phosphate + 2 H(+). The protein operates within purine metabolism; AMP biosynthesis via de novo pathway; AMP from IMP: step 1/2. Functionally, plays an important role in the de novo pathway of purine nucleotide biosynthesis. Catalyzes the first committed step in the biosynthesis of AMP from IMP. The protein is Adenylosuccinate synthetase of Zymomonas mobilis subsp. mobilis (strain ATCC 31821 / ZM4 / CP4).